The primary structure comprises 813 residues: Phosphoribosylformylglycinamidine synthase subunit PurL (813 aa).

His56 is an active-site residue. ATP-binding residues include Tyr59 and Lys103. Glu105 contributes to the Mg(2+) binding site. Substrate is bound by residues 106 to 109 (SHNH) and Arg128. The active-site Proton acceptor is His107. Residue Asp129 coordinates Mg(2+). Gln253 is a substrate binding site. Asp281 is a binding site for Mg(2+). 325 to 327 (ESQ) lines the substrate pocket. Residues Asn511 and Gly548 each coordinate ATP. Asn549 contacts Mg(2+). Ser551 contacts substrate.

The protein belongs to the FGAMS family. In terms of assembly, monomer. Part of the FGAM synthase complex composed of 1 PurL, 1 PurQ and 2 PurS subunits.

The protein localises to the cytoplasm. The enzyme catalyses N(2)-formyl-N(1)-(5-phospho-beta-D-ribosyl)glycinamide + L-glutamine + ATP + H2O = 2-formamido-N(1)-(5-O-phospho-beta-D-ribosyl)acetamidine + L-glutamate + ADP + phosphate + H(+). It functions in the pathway purine metabolism; IMP biosynthesis via de novo pathway; 5-amino-1-(5-phospho-D-ribosyl)imidazole from N(2)-formyl-N(1)-(5-phospho-D-ribosyl)glycinamide: step 1/2. Its function is as follows. Part of the phosphoribosylformylglycinamidine synthase complex involved in the purines biosynthetic pathway. Catalyzes the ATP-dependent conversion of formylglycinamide ribonucleotide (FGAR) and glutamine to yield formylglycinamidine ribonucleotide (FGAM) and glutamate. The FGAM synthase complex is composed of three subunits. PurQ produces an ammonia molecule by converting glutamine to glutamate. PurL transfers the ammonia molecule to FGAR to form FGAM in an ATP-dependent manner. PurS interacts with PurQ and PurL and is thought to assist in the transfer of the ammonia molecule from PurQ to PurL. This chain is Phosphoribosylformylglycinamidine synthase subunit PurL, found in Corynebacterium jeikeium (strain K411).